We begin with the raw amino-acid sequence, 298 residues long: Probable pyridoxal 5'-phosphate synthase subunit SNZ2 (298 aa).

Asp-21 contributes to the D-ribose 5-phosphate binding site. The active-site Schiff-base intermediate with D-ribose 5-phosphate is the Lys-78. D-ribose 5-phosphate is bound by residues Gly-150, Gly-213, and 234 to 235 (GS).

It belongs to the PdxS/SNZ family. In terms of assembly, homohexamer. Interacts with THI11.

The enzyme catalyses aldehydo-D-ribose 5-phosphate + D-glyceraldehyde 3-phosphate + L-glutamine = pyridoxal 5'-phosphate + L-glutamate + phosphate + 3 H2O + H(+). The protein operates within cofactor biosynthesis; pyridoxal 5'-phosphate biosynthesis. Functionally, catalyzes the formation of pyridoxal 5'-phosphate from ribose 5-phosphate (RBP), glyceraldehyde 3-phosphate (G3P) and ammonia. The ammonia is provided by a SNO isoform. Can also use ribulose 5-phosphate and dihydroxyacetone phosphate as substrates, resulting from enzyme-catalyzed isomerization of RBP and G3P, respectively. This is Probable pyridoxal 5'-phosphate synthase subunit SNZ2 (SNZ2) from Saccharomyces cerevisiae (strain ATCC 204508 / S288c) (Baker's yeast).